The sequence spans 742 residues: Protein CdcH (742 aa).

ATP-binding positions include 230–237 (GPPGTGKT) and 503–510 (GPPGTGKT). A disordered region spans residues 722 to 742 (FKGSQGPNVNSRQGSEHIGFQ). Residues 723–734 (KGSQGPNVNSRQ) are compositionally biased toward polar residues.

This sequence belongs to the AAA ATPase family. CDC48 subfamily.

Functionally, may be part of a transduction pathway connecting light to cell division. The chain is Protein CdcH (cdcH) from Halobacterium salinarum (strain ATCC 700922 / JCM 11081 / NRC-1) (Halobacterium halobium).